The chain runs to 275 residues: MQQLQADFRDPRCVSPVDFADHDAPSQIVGNVEEHGFALVDMADAGPPDARIAALSTALRLGEPYIPALYRYGETKDYSAPYSDIRSEPTDRHPGFSTTAGQIWHVDGLLDDIGEIKTTILYCVRAAHRGGDTMLFNSLAAFAELREKDQDAAEALLSPAALNRRSTIPGIDVNATGPVFSVDDNGDLVTRYTDNETCTWDYSAGPPGGLRRALDFLRTATDDPRYRLAVRLAPGQALVFRNDRLSHGRQPYEDKPDARRHLVRALYAEAPRASN.

3 residues coordinate Fe cation: H105, D107, and H247.

Fe(2+) serves as cofactor.

The catalysed reaction is UMP + 2-oxoglutarate + O2 = uridine-5'-aldehyde + succinate + phosphate + CO2. It functions in the pathway antibiotic biosynthesis. Enhanced by ascorbic acid and inhibited by Zn(2+). In terms of biological role, dioxygenase involved in the biosynthesis of the capuramycin-type nucleoside antibiotic A-102395. Catalyzes the dephosphorylation and oxidation of UMP to generate uridine-5'-aldehyde. Can also use the alternative alpha-keto acids pyruvate and alpha-ketoadipate (2-oxoadipate), with very low efficiency. Cannot use alpha-ketobutyrate, alpha-ketovalerate and oxaloacetate. In Amycolatopsis sp, this protein is Uridine-5'-phosphate dioxygenase.